The following is a 611-amino-acid chain: Threonine--tRNA ligase (611 aa).

The tract at residues 1–145 is editing domain; sequence MRLLLIHSDH…TILPGEGAAA (145 aa). The interval 195 to 487 is catalytic; that stretch reads VHVDLMRAKE…TAAQEVPSFP (293 aa). Zn(2+) contacts are provided by Cys287, His339, and His460.

The protein belongs to the class-II aminoacyl-tRNA synthetase family. Homodimer. The cofactor is Zn(2+).

It is found in the cytoplasm. The enzyme catalyses tRNA(Thr) + L-threonine + ATP = L-threonyl-tRNA(Thr) + AMP + diphosphate + H(+). In terms of biological role, catalyzes the attachment of threonine to tRNA(Thr) in a two-step reaction: L-threonine is first activated by ATP to form Thr-AMP and then transferred to the acceptor end of tRNA(Thr). Also edits incorrectly charged L-seryl-tRNA(Thr). In Methanoculleus marisnigri (strain ATCC 35101 / DSM 1498 / JR1), this protein is Threonine--tRNA ligase.